A 314-amino-acid polypeptide reads, in one-letter code: MKVSLLIFLIILVGVIKSFDINSIDDSHWESDEGFEHHKCWKNLTGYYTEFALSAYNTMFPTPYGVIPVSFYEGGVVTADIKGQQMYVHYGIVAKNFTTWGQYYAYGKNQTQYVVNNSSCVAMKLQFPFPDKLPKFKKVGTTKIGQTDVDVWIVKGKQQCNVTRSCILIQKDTCTLMSANFGNKDKSNLGFSLLNYYRYENKPHYDKFQLPSQCWDVKPKDENENKEEQGLFANEEELENKEYFGDNQQAPSMRITKNNPHLNNNNNNKKYHHREHETPNPDLIKTTTKTSTKTTSFSRATNDSPKSIDFHHLF.

The signal sequence occupies residues 1-18; it reads MKVSLLIFLIILVGVIKS. Residues N43, N96, N109, N116, N117, and N161 are each glycosylated (N-linked (GlcNAc...) asparagine). Residues 252–314 are disordered; the sequence is SMRITKNNPH…PKSIDFHHLF (63 aa). Composition is skewed to low complexity over residues 257–268 and 285–296; these read KNNPHLNNNNNN and KTTTKTSTKTTS.

It localises to the secreted. This is an uncharacterized protein from Dictyostelium discoideum (Social amoeba).